The sequence spans 131 residues: Modulator protein MzrA (131 aa).

The Cytoplasmic portion of the chain corresponds to 1-14 (MSIRWLFPKLTPRK). The chain crosses the membrane as a helical span at residues 15-31 (VARILILLALPIIALTQ). At 32–131 (SQSLRHSQDD…KLTQKQSKLG (100 aa)) the chain is on the periplasmic side.

The protein belongs to the MzrA family. Interacts with EnvZ.

The protein localises to the cell inner membrane. Functionally, modulates the activity of the EnvZ/OmpR two-component regulatory system, probably by directly modulating EnvZ enzymatic activity and increasing stability of phosphorylated OmpR. The sequence is that of Modulator protein MzrA from Pectobacterium carotovorum subsp. carotovorum (strain PC1).